A 100-amino-acid polypeptide reads, in one-letter code: Ribosomal processing cysteine protease Prp (100 aa).

H16 serves as the catalytic Proton donor. C28 acts as the Nucleophile in catalysis.

Belongs to the Prp family. Homodimer.

An essential cysteine protease that cleaves the N-terminus from ribosomal protein bL27. The sequence is that of Ribosomal processing cysteine protease Prp from Mycoplasma pneumoniae (strain ATCC 29342 / M129 / Subtype 1) (Mycoplasmoides pneumoniae).